Consider the following 434-residue polypeptide: Ribosomal protein uS12 methylthiotransferase RimO (434 aa).

The region spanning Asn4–Tyr122 is the MTTase N-terminal domain. Cys13, Cys51, Cys85, Cys146, Cys150, and Cys153 together coordinate [4Fe-4S] cluster. The 232-residue stretch at Thr132–Ala363 folds into the Radical SAM core domain. The region spanning Glu366–Asp434 is the TRAM domain.

The protein belongs to the methylthiotransferase family. RimO subfamily. [4Fe-4S] cluster serves as cofactor.

It is found in the cytoplasm. It catalyses the reaction L-aspartate(89)-[ribosomal protein uS12]-hydrogen + (sulfur carrier)-SH + AH2 + 2 S-adenosyl-L-methionine = 3-methylsulfanyl-L-aspartate(89)-[ribosomal protein uS12]-hydrogen + (sulfur carrier)-H + 5'-deoxyadenosine + L-methionine + A + S-adenosyl-L-homocysteine + 2 H(+). In terms of biological role, catalyzes the methylthiolation of an aspartic acid residue of ribosomal protein uS12. This is Ribosomal protein uS12 methylthiotransferase RimO from Porphyromonas gingivalis (strain ATCC 33277 / DSM 20709 / CIP 103683 / JCM 12257 / NCTC 11834 / 2561).